Here is a 599-residue protein sequence, read N- to C-terminus: Sulfite reductase [NADPH] flavoprotein alpha-component (599 aa).

The region spanning 64-202 is the Flavodoxin-like domain; that stretch reads ITIISASQTG…AASEWRARVV (139 aa). FMN contacts are provided by residues 70-75, 117-120, and 153-162; these read SQTGNA, STQG, and LGDSSYEFFC. In terms of domain architecture, FAD-binding FR-type spans 234-448; sequence DAPLVASLSV…IEHNDNFRLP (215 aa). Residues Thr-322, Ala-356, 386–389, 404–406, Tyr-410, and 419–422 each bind FAD; these read RLYS, TVG, and GGAS. NADP(+) contacts are provided by residues 519–520, 525–529, and Asp-561; these read SR and KVYVQ. Tyr-599 is an FAD binding site.

It belongs to the NADPH-dependent sulphite reductase flavoprotein subunit CysJ family. The protein in the N-terminal section; belongs to the flavodoxin family. This sequence in the C-terminal section; belongs to the flavoprotein pyridine nucleotide cytochrome reductase family. As to quaternary structure, alpha(8)-beta(8). The alpha component is a flavoprotein, the beta component is a hemoprotein. The cofactor is FAD. FMN is required as a cofactor.

The enzyme catalyses hydrogen sulfide + 3 NADP(+) + 3 H2O = sulfite + 3 NADPH + 4 H(+). It functions in the pathway sulfur metabolism; hydrogen sulfide biosynthesis; hydrogen sulfide from sulfite (NADPH route): step 1/1. Component of the sulfite reductase complex that catalyzes the 6-electron reduction of sulfite to sulfide. This is one of several activities required for the biosynthesis of L-cysteine from sulfate. The flavoprotein component catalyzes the electron flow from NADPH -&gt; FAD -&gt; FMN to the hemoprotein component. The chain is Sulfite reductase [NADPH] flavoprotein alpha-component from Escherichia coli (strain ATCC 8739 / DSM 1576 / NBRC 3972 / NCIMB 8545 / WDCM 00012 / Crooks).